The primary structure comprises 465 residues: Ras GTPase-activating protein-binding protein 1 (465 aa).

The 123-residue stretch at 11-133 (VGREFVRQYY…FYVHNDIFRY (123 aa)) folds into the NTF2 domain. Glycyl lysine isopeptide (Lys-Gly) (interchain with G-Cter in ubiquitin) cross-links involve residues K36, K50, K59, K64, K76, and K123. Residues 142 to 224 (ITEPQEESEE…EPVLEETAPE (83 aa)) are acidic disordered region. The residue at position 143 (T143) is a Phosphothreonine. Composition is skewed to acidic residues over residues 145 to 157 (PQEE…EEPE) and 184 to 205 (EHLE…EQEP). Positions 145-242 (PQEESEEEVE…APADIAQTVQ (98 aa)) are disordered. At S149 the chain carries Phosphoserine. Residues S230, S231, S249, and S252 each carry the phosphoserine modification. The tract at residues 254 to 326 (TSKNLPPSGA…PVREAGEQGD (73 aa)) is disordered. 2 stretches are compositionally biased toward basic and acidic residues: residues 296–306 (PQRDQRVREQR) and 317–326 (PVREAGEQGD). The RRM domain occupies 339–414 (HQLFIGNLPH…VRLNVEEKKT (76 aa)). Glycyl lysine isopeptide (Lys-Gly) (interchain with G-Cter in ubiquitin) cross-links involve residues K352 and K356. S372 carries the phosphoserine modification. K375 participates in a covalent cross-link: Glycyl lysine isopeptide (Lys-Gly) (interchain with G-Cter in ubiquitin). K375 carries the N6-acetyllysine; alternate modification. A Glycyl lysine isopeptide (Lys-Gly) (interchain with G-Cter in SUMO2); alternate cross-link involves residue K375. K392 participates in a covalent cross-link: Glycyl lysine isopeptide (Lys-Gly) (interchain with G-Cter in ubiquitin); alternate. The interval 409 to 465 (VEEKKTRAAREGDRRDNRLRGPGGPRGGLGGGMRGPPRGGMVQKPGFGVGRSIAPRQ) is RG-rich region. The segment covering 412 to 427 (KKTRAAREGDRRDNRL) has biased composition (basic and acidic residues). The interval 412 to 465 (KKTRAAREGDRRDNRLRGPGGPRGGLGGGMRGPPRGGMVQKPGFGVGRSIAPRQ) is disordered. R428 is modified (asymmetric dimethylarginine). The segment covering 429–446 (GPGGPRGGLGGGMRGPPR) has biased composition (gly residues). Residue R434 is modified to Asymmetric dimethylarginine; alternate. Omega-N-methylarginine; alternate occurs at positions 434, 446, 459, and 464. R459 bears the Dimethylated arginine; alternate mark.

As to quaternary structure, homodimer and oligomer. Component of a TAU mRNP complex, at least composed of IGF2BP1, ELAVL4 and G3BP1. Binds to the SH3 domain of Ras GTPase-activating protein (RASA1) in proliferating cells. No interaction in quiescent cells. Interacts (via NTF2 domain) with USP10; inhibiting stress granule formation by lowering G3BP1 valence. Interacts (via NTF2 domain) with CAPRIN1; promoting stress granule formation by lowering the saturation-concentration of G3BP1. Interacts (via NTF2 domain) with UBAP2L; promoting stress granule formation. Associates (via RG-rich region) with 40S ribosome subunits. Interacts with RPTOR and SPAG5; this complex is increased by oxidative stress. Interacts with ATXN2L. Interacts with STYXL1. Interacts with CGAS (via N-terminus); this interaction promotes the DNA-binding and activation of CGAS. Interacts (via C-terminus) with RIGI. Interacts with PABPC1. Interacts with QKI (isoforms QKI6 and QKI7); directing N(7)-methylguanine-containing mRNAs to stress granules. Requires Mg(2+) as cofactor. In terms of processing, phosphorylation of the acidic disordered region regulates stress granule assembly. RASA1-dependent phosphorylation of Ser-149 induces a conformational change that prevents self-association. Dephosphorylation after HRAS activation is required for stress granule assembly. Ser-149 phosphorylation induces partial nuclear localization. Arg-435 is dimethylated, probably to asymmetric dimethylarginine. Post-translationally, ubiquitinated by TRIM21 via 'Lys-63'-linked polyubiquitination in the NTF2 domain in response to heat shock, leading to stress granule disassembly: ubiquitination promotes interaction with the FAF2 adapter, followed by interaction with VCP, which extracts G3BP1 from stress granules, leading to stress granule disassembly. In case of prolonged stress, ubiquitination by TRIM21 leads to autophagy-dependent degradation of G3BP1 via recruitment of ubiquitinated G3BP1 by SQSTM1 and/or CALCOCO2 to autophagosomes.

The protein resides in the cytoplasm. The protein localises to the cytosol. Its subcellular location is the perikaryon. It localises to the stress granule. It is found in the nucleus. It catalyses the reaction ATP + H2O = ADP + phosphate + H(+). Under physiological conditions, G3BP1 adopts a compact state that is stabilized by intramolecular interactions between the RG-rich and the acidic regions that inhibit phase separation. Upon stress, polysomes disassemble and mRNAs are released in an unfolded protein-free state. Binding of unfolded mRNA to G3BP1 outcompetes the intramolecular interactions and RNA-bound G3BP1 adopts an expanded conformation in which the RG-rich region becomes exposed to engage in protein-protein and protein-RNA interactions, allowing physical cross-linking of RNA molecules to form protein-RNA condensates, leading to liquid-liquid phase separation (LLPS). In terms of biological role, protein involved in various processes, such as stress granule formation and innate immunity. Plays an essential role in stress granule formation. Stress granules are membraneless compartments that store mRNAs and proteins, such as stalled translation pre-initiation complexes, in response to stress. Promotes formation of stress granules phase-separated membraneless compartment by undergoing liquid-liquid phase separation (LLPS) upon unfolded RNA-binding: functions as a molecular switch that triggers RNA-dependent LLPS in response to a rise in intracellular free RNA concentrations. Also acts as an ATP- and magnesium-dependent helicase: unwinds DNA/DNA, RNA/DNA, and RNA/RNA substrates with comparable efficiency. Acts unidirectionally by moving in the 5' to 3' direction along the bound single-stranded DNA. Unwinds preferentially partial DNA and RNA duplexes having a 17 bp annealed portion and either a hanging 3' tail or hanging tails at both 5'- and 3'-ends. Plays an essential role in innate immunity by promoting CGAS and RIGI activity. Participates in the DNA-triggered cGAS/STING pathway by promoting the DNA binding and activation of CGAS. Triggers the condensation of cGAS, a process probably linked to the formation of membrane-less organelles. Also enhances RIGI-induced type I interferon production probably by helping RIGI at sensing pathogenic RNA. May also act as a phosphorylation-dependent sequence-specific endoribonuclease in vitro: Cleaves exclusively between cytosine and adenine and cleaves MYC mRNA preferentially at the 3'-UTR. In Bos taurus (Bovine), this protein is Ras GTPase-activating protein-binding protein 1 (G3BP1).